Here is a 220-residue protein sequence, read N- to C-terminus: MSKKDGYLEFFSYFNISEEKFINFAKESIIFIKQEKAKQEWDILKSKILNEKENVYVRNFGRNGQGGHLYQEVYKQLFLANIIVDPSNNNYPTKLLEKSVGLVKNKNLYNYQVSHIFGLTKNPYAFCAPWNIVFIPKILDPFTGHESKGEITEKITAMYRRLMWDKYEDLISDYNKIMEKYREVIKSEIEKYKALSKRKNDIYSRFIESVNIEFNVIEKI.

A coiled-coil region spans residues 165-202; it reads DKYEDLISDYNKIMEKYREVIKSEIEKYKALSKRKNDI.

This is an uncharacterized protein from Pasteurella multocida (strain Pm70).